The sequence spans 382 residues: MRSGGRGRPRLRLGERGLMEPLLPPKRRLLPRVRLLPLLLALAVGSAFYTIWSGWHRRTEELPLGRELRVPLIGSLPEARLRRVVGQLDPQRLWSTYLRPLLVVRTPGSPGNLQVRKFLEATLRSLTAGWHVELDPFTASTPLGPVDFGNVVATLDPRAARHLTLACHYDSKLFPPGSTPFVGATDSAVPCALLLELAQALDLELSRAKKQAAPVTLQLLFLDGEEALKEWGPKDSLYGSRHLAQLMESIPHSPGPTRIQAIELFMLLDLLGAPNPTFYSHFPRTVRWFHRLRSIEKRLHRLNLLQSHPQEVMYFQPGEPFGSVEDDHIPFLRRGVPVLHLISTPFPAVWHTPADTEVNLHPPTVHNLCRILAVFLAEYLGL.

The helical transmembrane segment at 35–55 threads the bilayer; that stretch reads LLPLLLALAVGSAFYTIWSGW. Cysteines 167 and 191 form a disulfide. D186 is a binding site for Zn(2+). Residue E225 is the Proton acceptor of the active site. E226 serves as a coordination point for Zn(2+). D269 serves as the catalytic Proton acceptor. Residue H351 coordinates Zn(2+).

It belongs to the glutaminyl-peptide cyclotransferase family.

The protein localises to the golgi apparatus membrane. It carries out the reaction N-terminal L-glutaminyl-[peptide] = N-terminal 5-oxo-L-prolyl-[peptide] + NH4(+). Its function is as follows. Responsible for the biosynthesis of pyroglutamyl peptides. The chain is Glutaminyl-peptide cyclotransferase-like protein (QPCTL) from Homo sapiens (Human).